We begin with the raw amino-acid sequence, 654 residues long: Bifunctional polymyxin resistance protein ArnA (654 aa).

The interval 1 to 303 (MKVIVFAYHE…NISRIKGKKL (303 aa)) is formyltransferase ArnAFT. The Proton donor; for formyltransferase activity role is filled by His-105. Position 137–141 (137–141 (TKKID)) interacts with (6R)-10-formyltetrahydrofolate. Residues 313-654 (NLKKILILGV…INFFINNNTS (342 aa)) form a dehydrogenase ArnADH region. NAD(+) is bound by residues Asp-346 and 367 to 368 (DI). Residues Ala-392, Tyr-397, and 431-432 (TS) contribute to the UDP-alpha-D-glucuronate site. The active-site Proton acceptor; for decarboxylase activity is the Glu-433. Residues Arg-459, Asn-491, 532–534 (QKR), and Tyr-612 contribute to the UDP-alpha-D-glucuronate site. Arg-618 functions as the Proton donor; for decarboxylase activity in the catalytic mechanism.

This sequence in the N-terminal section; belongs to the Fmt family. UDP-L-Ara4N formyltransferase subfamily. It in the C-terminal section; belongs to the NAD(P)-dependent epimerase/dehydratase family. UDP-glucuronic acid decarboxylase subfamily. In terms of assembly, homohexamer, formed by a dimer of trimers.

The enzyme catalyses UDP-alpha-D-glucuronate + NAD(+) = UDP-beta-L-threo-pentopyranos-4-ulose + CO2 + NADH. It carries out the reaction UDP-4-amino-4-deoxy-beta-L-arabinose + (6R)-10-formyltetrahydrofolate = UDP-4-deoxy-4-formamido-beta-L-arabinose + (6S)-5,6,7,8-tetrahydrofolate + H(+). It functions in the pathway nucleotide-sugar biosynthesis; UDP-4-deoxy-4-formamido-beta-L-arabinose biosynthesis; UDP-4-deoxy-4-formamido-beta-L-arabinose from UDP-alpha-D-glucuronate: step 1/3. It participates in nucleotide-sugar biosynthesis; UDP-4-deoxy-4-formamido-beta-L-arabinose biosynthesis; UDP-4-deoxy-4-formamido-beta-L-arabinose from UDP-alpha-D-glucuronate: step 3/3. Its pathway is bacterial outer membrane biogenesis; lipopolysaccharide biosynthesis. Functionally, bifunctional enzyme that catalyzes the oxidative decarboxylation of UDP-glucuronic acid (UDP-GlcUA) to UDP-4-keto-arabinose (UDP-Ara4O) and the addition of a formyl group to UDP-4-amino-4-deoxy-L-arabinose (UDP-L-Ara4N) to form UDP-L-4-formamido-arabinose (UDP-L-Ara4FN). The modified arabinose is attached to lipid A and is required for resistance to polymyxin and cationic antimicrobial peptides. In Wigglesworthia glossinidia brevipalpis, this protein is Bifunctional polymyxin resistance protein ArnA.